Reading from the N-terminus, the 890-residue chain is DNA mismatch repair protein MutS (890 aa).

Position 607–614 (607–614 (GPNMSGKS)) interacts with ATP.

Belongs to the DNA mismatch repair MutS family.

Its function is as follows. This protein is involved in the repair of mismatches in DNA. It is possible that it carries out the mismatch recognition step. This protein has a weak ATPase activity. The sequence is that of DNA mismatch repair protein MutS from Bacillus thuringiensis subsp. konkukian (strain 97-27).